The sequence spans 940 residues: Protein translocase subunit SecA (940 aa).

Residues Q86, 104 to 108 (GEGKT), and D494 each bind ATP. The tract at residues 884–940 (ATAKAQKDQQAEDAVLVGEDEPETPQGPPARGAFGQPTGASSAPQNREERRKADRRK) is disordered. The span at 929-940 (NREERRKADRRK) shows a compositional bias: basic and acidic residues.

Belongs to the SecA family. In terms of assembly, monomer and homodimer. Part of the essential Sec protein translocation apparatus which comprises SecA, SecYEG and auxiliary proteins SecDF. Other proteins may also be involved.

Its subcellular location is the cell membrane. The protein localises to the cytoplasm. It carries out the reaction ATP + H2O + cellular proteinSide 1 = ADP + phosphate + cellular proteinSide 2.. Functionally, part of the Sec protein translocase complex. Interacts with the SecYEG preprotein conducting channel. Has a central role in coupling the hydrolysis of ATP to the transfer of proteins into and across the cell membrane, serving as an ATP-driven molecular motor driving the stepwise translocation of polypeptide chains across the membrane. This Clavibacter sepedonicus (Clavibacter michiganensis subsp. sepedonicus) protein is Protein translocase subunit SecA.